The primary structure comprises 497 residues: 3-ketoacyl-CoA synthase 6 (497 aa).

2 helical membrane-spanning segments follow: residues 25–45 (LVNHFLSFLLIPIMAIVAVEL) and 64–84 (LVQVLCSSFFVIFISTVYFMS). One can recognise an FAE domain in the interval 81 to 370 (YFMSKPRTIY…FLTSLIGRKI (290 aa)). Catalysis depends on residues Cys225, His304, His388, His392, His421, and Asn425.

The protein belongs to the thiolase-like superfamily. Chalcone/stilbene synthases family. In epidermal cells of aerial tissues and in the tapetum of anthers near maturity. Expressed in siliques, flowers and leaves.

It is found in the endoplasmic reticulum membrane. It carries out the reaction a very-long-chain acyl-CoA + malonyl-CoA + H(+) = a very-long-chain 3-oxoacyl-CoA + CO2 + CoA. It participates in lipid metabolism; fatty acid biosynthesis. With respect to regulation, strongly inhibited by metazachlor and mefluidide. Functionally, contributes to cuticular wax and suberin biosynthesis. Involved in both decarbonylation and acyl-reduction wax synthesis pathways. Required for elongation of C24 fatty acids, an essential step of the cuticular wax production. Major condensing enzyme for stem wax and pollen coat lipid biosynthesis. This chain is 3-ketoacyl-CoA synthase 6, found in Arabidopsis thaliana (Mouse-ear cress).